Reading from the N-terminus, the 76-residue chain is Putative membrane protein insertion efficiency factor (76 aa).

It belongs to the UPF0161 family.

It is found in the cell inner membrane. Its function is as follows. Could be involved in insertion of integral membrane proteins into the membrane. The polypeptide is Putative membrane protein insertion efficiency factor (Paraburkholderia phymatum (strain DSM 17167 / CIP 108236 / LMG 21445 / STM815) (Burkholderia phymatum)).